A 448-amino-acid polypeptide reads, in one-letter code: MKLSHLSLAIISAITLAACGGGNDDKPMPQDPDNGALVEQRNEAIKKKATAYLEDKDGKAPALTKDEEATLSQIDENLFNEYKKKQKELENQASDDEVDPTKTGVVGNLDLGKQASQGTTQYVRGTKSSFDAENNPKEVSSATAILGVEAKTQNPWLTNIVLARKVRADGTVSIMQYLGNDGSDAADFTNVKSLQAQNDHNVVKFSDLKTNKPLDEAKLEAQKKQVDLIIKLYEKIDSSEITTEEKEELEKFVALKEELNAIDIKSPEGYVGLDEKAHKLFSETGASGSDDIIFGDDVPTNNSVLGTADTGSGAIPPVKPIYTSGKPGADATGAGALGLVGMNFKVGGTQEAIQGTEEKSQSSTRVFGRQYNTQSRAERKFNSYADAAVLALSSEKDLANAIAGITDQSELANITADMKNAKINYHLAVKPQKLDYVQYGRVTGNLDP.

The signal sequence occupies residues 1 to 20; that stretch reads MKLSHLSLAIISAITLAACG. The disordered stretch occupies residues 87-109; it reads KELENQASDDEVDPTKTGVVGNL.

It belongs to the peptidase S17 family. The cofactor is a divalent metal cation.

Functionally, this enzyme is a chymotrypsin-like serine protease. Degrades a variety of substrates present in the skin and hoof of the sheep, including elastin, keratin, fibrinogen and collagen. It seems to play an important role in the pathogenesis of sheep footrot. This is Extracellular serine protease (prvA) from Dichelobacter nodosus (Bacteroides nodosus).